Consider the following 299-residue polypeptide: tRNA pseudouridine synthase A (299 aa).

Residue aspartate 67 is the Nucleophile of the active site. Tyrosine 125 is a substrate binding site.

Belongs to the tRNA pseudouridine synthase TruA family. Homodimer.

It carries out the reaction uridine(38/39/40) in tRNA = pseudouridine(38/39/40) in tRNA. In terms of biological role, formation of pseudouridine at positions 38, 39 and 40 in the anticodon stem and loop of transfer RNAs. This chain is tRNA pseudouridine synthase A, found in Parasynechococcus marenigrum (strain WH8102).